The following is a 310-amino-acid chain: Porphobilinogen deaminase (310 aa).

The residue at position 242 (cysteine 242) is an S-(dipyrrolylmethanemethyl)cysteine.

It belongs to the HMBS family. As to quaternary structure, monomer. It depends on dipyrromethane as a cofactor.

It catalyses the reaction 4 porphobilinogen + H2O = hydroxymethylbilane + 4 NH4(+). The protein operates within porphyrin-containing compound metabolism; protoporphyrin-IX biosynthesis; coproporphyrinogen-III from 5-aminolevulinate: step 2/4. Its function is as follows. Tetrapolymerization of the monopyrrole PBG into the hydroxymethylbilane pre-uroporphyrinogen in several discrete steps. This chain is Porphobilinogen deaminase, found in Halorhodospira halophila (strain DSM 244 / SL1) (Ectothiorhodospira halophila (strain DSM 244 / SL1)).